We begin with the raw amino-acid sequence, 352 residues long: MAQDDNRSKALNAALSQIERQFGKGAVMRLGDTPRVATPAISTGSLGLDIALGVGGLPMGRVVEIFGPESSGKTTMTLSVIAQGQKQGKTCAFIDAEHALDPTYAEKLGVNLDDLLVSQPDTGEQALEICDMLVRSGGVDVIVVDSVAALTPRAEIEGEMGDSHVGLQARLMSQALRKVTGNIKNANCMVMFVNQIRMKIGVMFGNPETTTGGNALKFYSSVRLDIRRTGSVKQGDEAIGNETRVKVVKNKVAPPFRQAEFQILYGKGIYHAGEVVDIGVQQGLVDKAGAWYSYQGNKIGQGKANAAQFLEDNPAIMEEIENEIRARLLSTPKPEAESQEKAAAAQDDDSLV.

67-74 (GPESSGKT) is an ATP binding site. Residues 330 to 352 (STPKPEAESQEKAAAAQDDDSLV) form a disordered region.

Belongs to the RecA family.

The protein resides in the cytoplasm. Functionally, can catalyze the hydrolysis of ATP in the presence of single-stranded DNA, the ATP-dependent uptake of single-stranded DNA by duplex DNA, and the ATP-dependent hybridization of homologous single-stranded DNAs. It interacts with LexA causing its activation and leading to its autocatalytic cleavage. In Chromohalobacter salexigens (strain ATCC BAA-138 / DSM 3043 / CIP 106854 / NCIMB 13768 / 1H11), this protein is Protein RecA.